The following is a 480-amino-acid chain: Glycogen synthase (480 aa).

Position 15 (Lys15) interacts with ADP-alpha-D-glucose.

This sequence belongs to the glycosyltransferase 1 family. Bacterial/plant glycogen synthase subfamily.

It catalyses the reaction [(1-&gt;4)-alpha-D-glucosyl](n) + ADP-alpha-D-glucose = [(1-&gt;4)-alpha-D-glucosyl](n+1) + ADP + H(+). The protein operates within glycan biosynthesis; glycogen biosynthesis. In terms of biological role, synthesizes alpha-1,4-glucan chains using ADP-glucose. The sequence is that of Glycogen synthase from Rhizobium tropici.